A 949-amino-acid polypeptide reads, in one-letter code: Bifunctional uridylyltransferase/uridylyl-removing enzyme (949 aa).

The interval 1–37 (MKETSFWGETPSLSFADDTDKPLSDRTASPPCDPASS) is disordered. The tract at residues 1 to 395 (MKETSFWGET…TTGEPPKVVP (395 aa)) is uridylyltransferase. Positions 396–756 (GPEEFQTIAG…AYPIPERGVT (361 aa)) are uridylyl-removing. An HD domain is found at 516–632 (VDEHIVEAVR…LDLADTIQSP (117 aa)). ACT domains lie at 757-834 (ELTV…LDIR) and 870-949 (VIEV…TPAS).

The protein belongs to the GlnD family. The cofactor is Mg(2+).

The enzyme catalyses [protein-PII]-L-tyrosine + UTP = [protein-PII]-uridylyl-L-tyrosine + diphosphate. The catalysed reaction is [protein-PII]-uridylyl-L-tyrosine + H2O = [protein-PII]-L-tyrosine + UMP + H(+). With respect to regulation, uridylyltransferase (UTase) activity is inhibited by glutamine, while glutamine activates uridylyl-removing (UR) activity. Its function is as follows. Modifies, by uridylylation and deuridylylation, the PII regulatory proteins (GlnB and homologs), in response to the nitrogen status of the cell that GlnD senses through the glutamine level. Under low glutamine levels, catalyzes the conversion of the PII proteins and UTP to PII-UMP and PPi, while under higher glutamine levels, GlnD hydrolyzes PII-UMP to PII and UMP (deuridylylation). Thus, controls uridylylation state and activity of the PII proteins, and plays an important role in the regulation of nitrogen assimilation and metabolism. In Gluconobacter oxydans (strain 621H) (Gluconobacter suboxydans), this protein is Bifunctional uridylyltransferase/uridylyl-removing enzyme.